A 146-amino-acid chain; its full sequence is Hemoglobin subunit beta-1 (146 aa).

In terms of domain architecture, Globin spans glutamate 2 to histidine 146. Heme b contacts are provided by histidine 63 and histidine 92.

Belongs to the globin family. In terms of assembly, hb1 is a heterotetramer of two alpha-1 chains and two beta-1 chains. Hb2 is a heterotetramer of two alpha-2 chains and two beta-1 chains. HbC is a heterotetramer of two alpha-1 chains and two beta-2 chains. Red blood cells.

Involved in oxygen transport from gills to the various peripheral tissues. This Eleginops maclovinus (Patagonian blennie) protein is Hemoglobin subunit beta-1.